The primary structure comprises 505 residues: Calcium/calmodulin-dependent protein kinase kinase 1 (505 aa).

Residues 27–66 (HLEEAEEGPEPASNGVDPPPRARAASVIPGSASRPTPVRP) are disordered. A phosphoserine mark is found at serine 67 and serine 74. Arginine 78 bears the Asymmetric dimethylarginine mark. Phosphoserine is present on serine 100. Position 108 is a phosphothreonine (threonine 108). The Protein kinase domain maps to 128–409 (YKLQSEIGKG…VSDIKLHPWV (282 aa)). ATP contacts are provided by residues 134 to 142 (IGKGAYGVV) and lysine 157. Residues 167–189 (QYGFPRRPPPRGSQAPQGGPAKQ) are RP domain. Aspartate 275 functions as the Proton acceptor in the catalytic mechanism. An autoinhibitory domain region spans residues 435-440 (KNSVKL). Residues 438–463 (VKLIPSWTTVILVKSMLRKRSFGNPF) are calmodulin-binding. Serine 458, serine 475, and serine 492 each carry phosphoserine. The disordered stretch occupies residues 460–505 (GNPFEPQARREERSMSAPGNLLLKEGCGEGGKSPELPGVQEDEAAS).

This sequence belongs to the protein kinase superfamily. Ser/Thr protein kinase family. Interacts with CAMK4 and calmodulin. Appears to be autophosphorylated. Phosphorylated at multiple sites by PRCAKA/PKA. Phosphorylation of Ser-458 is blocked upon binding to Ca(2+)/calmodulin. May be phosphorylated by CAMK1 and CAMK4. In terms of tissue distribution, mostly expressed in the brain with higher levels in cortex and hippocampus. Lower expression levels were detected in striatum, nucleus accumbens and cerebellum (at protein level). Abundant in forebrain, weaker in cerebellum and also detected in thymus and spleen.

The protein localises to the cytoplasm. It is found in the nucleus. It catalyses the reaction L-seryl-[protein] + ATP = O-phospho-L-seryl-[protein] + ADP + H(+). It carries out the reaction L-threonyl-[protein] + ATP = O-phospho-L-threonyl-[protein] + ADP + H(+). With respect to regulation, activated by Ca(2+)/calmodulin. Binding of calmodulin may relieve intrasteric autoinhibition. Partially inhibited upon phosphorylation by PRCAKA/PKA. May be regulated through phosphorylation by CAMK1 and CAMK4. Functionally, calcium/calmodulin-dependent protein kinase that belongs to a proposed calcium-triggered signaling cascade involved in a number of cellular processes. Phosphorylates CAMK1, CAMK1D, CAMK1G and CAMK4. Involved in regulating cell apoptosis. Promotes cell survival by phosphorylating AKT1/PKB that inhibits pro-apoptotic BAD/Bcl2-antagonist of cell death. This Rattus norvegicus (Rat) protein is Calcium/calmodulin-dependent protein kinase kinase 1 (Camkk1).